A 213-amino-acid chain; its full sequence is Uridine kinase (213 aa).

An ATP-binding site is contributed by 15-22 (GASASGKS).

The protein belongs to the uridine kinase family.

The protein localises to the cytoplasm. The catalysed reaction is uridine + ATP = UMP + ADP + H(+). It catalyses the reaction cytidine + ATP = CMP + ADP + H(+). It participates in pyrimidine metabolism; CTP biosynthesis via salvage pathway; CTP from cytidine: step 1/3. It functions in the pathway pyrimidine metabolism; UMP biosynthesis via salvage pathway; UMP from uridine: step 1/1. This Escherichia fergusonii (strain ATCC 35469 / DSM 13698 / CCUG 18766 / IAM 14443 / JCM 21226 / LMG 7866 / NBRC 102419 / NCTC 12128 / CDC 0568-73) protein is Uridine kinase.